The sequence spans 124 residues: Cytochrome b5-like protein (124 aa).

A helical transmembrane segment spans residues 5–22 (YLLILIIIYVIKIICRYF). The region spanning 49 to 124 (NQINQVNQVN…ILSKYKITEK (76 aa)) is the Cytochrome b5 heme-binding domain. Histidine 84 and histidine 108 together coordinate heme.

It belongs to the cytochrome b5 family.

It is found in the membrane. Membrane bound hemoprotein which function as an electron carrier for several membrane bound oxygenases. The protein is Cytochrome b5-like protein of Acanthamoeba polyphaga (Amoeba).